The primary structure comprises 30 residues: Cytochrome b6/f complex 12.6 kDa peptide (30 aa).

The disordered stretch occupies residues 1 to 30 (SGSGVRSAKKGGKAQGGQAGVGYKGSTEPG). Residues 13-23 (KAQGGQAGVGY) are compositionally biased toward gly residues.

The protein resides in the plastid. It is found in the chloroplast. Its function is as follows. May be a component of the cytochrome b6/f complex which is part of the photosynthetic respiratory chain. The sequence is that of Cytochrome b6/f complex 12.6 kDa peptide from Euglena gracilis.